The sequence spans 309 residues: Homoserine O-succinyltransferase (309 aa).

Cys142 serves as the catalytic Acyl-thioester intermediate. Positions 163 and 192 each coordinate substrate. His235 serves as the catalytic Proton acceptor. Glu237 is a catalytic residue. Arg249 contributes to the substrate binding site.

The protein belongs to the MetA family. Homodimer.

It is found in the cytoplasm. It carries out the reaction L-homoserine + succinyl-CoA = O-succinyl-L-homoserine + CoA. It participates in amino-acid biosynthesis; L-methionine biosynthesis via de novo pathway; O-succinyl-L-homoserine from L-homoserine: step 1/1. Its function is as follows. Transfers a succinyl group from succinyl-CoA to L-homoserine, forming succinyl-L-homoserine. The sequence is that of Homoserine O-succinyltransferase from Escherichia coli O17:K52:H18 (strain UMN026 / ExPEC).